A 726-amino-acid chain; its full sequence is DNA ligase (726 aa).

Residues 34–38, 83–84, and glutamate 115 contribute to the NAD(+) site; these read DAEYD and SL. Lysine 117 (N6-AMP-lysine intermediate) is an active-site residue. Residues arginine 138, glutamate 190, lysine 306, and lysine 330 each contribute to the NAD(+) site. Residues cysteine 424, cysteine 427, cysteine 442, and cysteine 448 each coordinate Zn(2+). A BRCT domain is found at 608-698; it reads SRGNALAGKT…RTADDQATPA (91 aa). The disordered stretch occupies residues 690–726; that stretch reads TADDQATPASDRRAATASVPPSDDAPGSPRQLDFDLT.

This sequence belongs to the NAD-dependent DNA ligase family. LigA subfamily. Mg(2+) is required as a cofactor. The cofactor is Mn(2+).

It catalyses the reaction NAD(+) + (deoxyribonucleotide)n-3'-hydroxyl + 5'-phospho-(deoxyribonucleotide)m = (deoxyribonucleotide)n+m + AMP + beta-nicotinamide D-nucleotide.. DNA ligase that catalyzes the formation of phosphodiester linkages between 5'-phosphoryl and 3'-hydroxyl groups in double-stranded DNA using NAD as a coenzyme and as the energy source for the reaction. It is essential for DNA replication and repair of damaged DNA. This chain is DNA ligase, found in Roseiflexus sp. (strain RS-1).